Here is a 264-residue protein sequence, read N- to C-terminus: Thymidylate synthase (264 aa).

Arg-21 lines the dUMP pocket. His-51 lines the (6R)-5,10-methylene-5,6,7,8-tetrahydrofolate pocket. 126 to 127 (RR) serves as a coordination point for dUMP. Residue Cys-146 is the Nucleophile of the active site. DUMP contacts are provided by residues 166 to 169 (RSCD), Asn-177, and 207 to 209 (HLY). Asp-169 provides a ligand contact to (6R)-5,10-methylene-5,6,7,8-tetrahydrofolate. Residue Ala-263 participates in (6R)-5,10-methylene-5,6,7,8-tetrahydrofolate binding.

The protein belongs to the thymidylate synthase family. Bacterial-type ThyA subfamily. In terms of assembly, homodimer.

It is found in the cytoplasm. It carries out the reaction dUMP + (6R)-5,10-methylene-5,6,7,8-tetrahydrofolate = 7,8-dihydrofolate + dTMP. It participates in pyrimidine metabolism; dTTP biosynthesis. Functionally, catalyzes the reductive methylation of 2'-deoxyuridine-5'-monophosphate (dUMP) to 2'-deoxythymidine-5'-monophosphate (dTMP) while utilizing 5,10-methylenetetrahydrofolate (mTHF) as the methyl donor and reductant in the reaction, yielding dihydrofolate (DHF) as a by-product. This enzymatic reaction provides an intracellular de novo source of dTMP, an essential precursor for DNA biosynthesis. The sequence is that of Thymidylate synthase from Klebsiella pneumoniae subsp. pneumoniae (strain ATCC 700721 / MGH 78578).